A 775-amino-acid polypeptide reads, in one-letter code: Dipeptidyl peptidase 4 (775 aa).

An N-terminal signal peptide occupies residues 1–15; sequence MKFLSLLLLAGIAQA. Residues Asn81, Asn111, Asn170, and Asn219 are each glycosylated (N-linked (GlcNAc...) asparagine). Active-site charge relay system residues include Ser613, Asp690, and His725.

The protein belongs to the peptidase S9B family.

It localises to the secreted. It catalyses the reaction Release of an N-terminal dipeptide, Xaa-Yaa-|-Zaa-, from a polypeptide, preferentially when Yaa is Pro, provided Zaa is neither Pro nor hydroxyproline.. In terms of biological role, extracellular dipeptidyl-peptidase which removes N-terminal dipeptides sequentially from polypeptides having unsubstituted N-termini provided that the penultimate residue is proline. Contributes to pathogenicity. The protein is Dipeptidyl peptidase 4 (DPP4) of Trichophyton equinum (Horse ringworm fungus).